The following is a 248-amino-acid chain: 2,3-bisphosphoglycerate-dependent phosphoglycerate mutase (248 aa).

Substrate is bound by residues 8–15 (RHGESTWN), 21–22 (TG), R60, 87–90 (ERHY), K98, 114–115 (RR), and 183–184 (GN). The active-site Tele-phosphohistidine intermediate is the H9. E87 (proton donor/acceptor) is an active-site residue.

It belongs to the phosphoglycerate mutase family. BPG-dependent PGAM subfamily. In terms of assembly, homodimer.

It catalyses the reaction (2R)-2-phosphoglycerate = (2R)-3-phosphoglycerate. The protein operates within carbohydrate degradation; glycolysis; pyruvate from D-glyceraldehyde 3-phosphate: step 3/5. Its function is as follows. Catalyzes the interconversion of 2-phosphoglycerate and 3-phosphoglycerate. The chain is 2,3-bisphosphoglycerate-dependent phosphoglycerate mutase from Burkholderia orbicola (strain MC0-3).